The sequence spans 273 residues: MSRIGQTFTALKAQNRKALISFITAGDPGKGLTVPLMHALVDAGTDIIELGVPFSDPMADGPVIQRASERALANKVGLKDVLAMTAEFRKVNTSTPVVLMGYANPFEHMGYETFAEAAKTAGVDGVLTVDIPPEESLGVSDVFKAHDLDPIFLLSPTTPESRVAQVAAVAGGFIYYVSLKGVTGSANLDTEEVARKVAMVRKHCDLPVGVGFGIRDAATAEAVARIADAVVVGSRIVNEIETAPEGECGARVKHLVADLRRGVDAASKQTENK.

Catalysis depends on proton acceptor residues Glu49 and Asp60.

Belongs to the TrpA family. As to quaternary structure, tetramer of two alpha and two beta chains.

It catalyses the reaction (1S,2R)-1-C-(indol-3-yl)glycerol 3-phosphate + L-serine = D-glyceraldehyde 3-phosphate + L-tryptophan + H2O. Its pathway is amino-acid biosynthesis; L-tryptophan biosynthesis; L-tryptophan from chorismate: step 5/5. Its function is as follows. The alpha subunit is responsible for the aldol cleavage of indoleglycerol phosphate to indole and glyceraldehyde 3-phosphate. This chain is Tryptophan synthase alpha chain, found in Thiobacillus denitrificans (strain ATCC 25259 / T1).